The sequence spans 473 residues: Cysteine--tRNA ligase (473 aa).

Cysteine 28 is a binding site for Zn(2+). The short motif at 30–40 (PTVYNMPHIGN) is the 'HIGH' region element. Cysteine 213, histidine 238, and glutamate 242 together coordinate Zn(2+). Positions 270 to 274 (KMSKS) match the 'KMSKS' region motif. An ATP-binding site is contributed by lysine 273.

The protein belongs to the class-I aminoacyl-tRNA synthetase family. Zn(2+) serves as cofactor.

Its subcellular location is the cytoplasm. The catalysed reaction is tRNA(Cys) + L-cysteine + ATP = L-cysteinyl-tRNA(Cys) + AMP + diphosphate. The protein is Cysteine--tRNA ligase of Methanosarcina acetivorans (strain ATCC 35395 / DSM 2834 / JCM 12185 / C2A).